Consider the following 96-residue polypeptide: ESAT-6-like protein EsxR (96 aa).

Belongs to the WXG100 family. ESAT-6 subfamily.

Its subcellular location is the secreted. The polypeptide is ESAT-6-like protein EsxR (Mycobacterium bovis (strain ATCC BAA-935 / AF2122/97)).